A 266-amino-acid polypeptide reads, in one-letter code: Metallo-beta-lactamase VIM-2 (266 aa).

An N-terminal signal peptide occupies residues 1-20; the sequence is MFKLLSKLLVYLTASIMAIA. Zn(2+) is bound by residues His114, His116, and Cys198.

The protein belongs to the metallo-beta-lactamase superfamily. Class-B beta-lactamase family. As to quaternary structure, monomer. Zn(2+) serves as cofactor.

The protein resides in the periplasm. It carries out the reaction a beta-lactam + H2O = a substituted beta-amino acid. Inhibited by chelating agents such as EDTA. Inhibited by a fungal natural product, aspergillomarasmine A (AMA). Inhibited by 2-triazolylthioacetamides. Class B beta-lactamase which confers resistance to the beta-lactam antibiotics, including penicillins, cephalosporins and carbapenems. Acts via hydrolysis of the beta-lactam ring. Has penicillin-, cephalosporin- and carbapenem-hydrolyzing activities. This chain is Metallo-beta-lactamase VIM-2, found in Escherichia coli.